A 296-amino-acid polypeptide reads, in one-letter code: uncharacterized protein (296 aa).

10 helical membrane-spanning segments follow: residues 8 to 28 (LFVLIAAFFWGTTGTVQALAP), 34 to 54 (LAFGAFRLLIGGSAMLLAVWI), 63 to 83 (WAWPLVFLAAVCMACYQPLFF), 89 to 109 (TGIAVGTVIAIGSAPIIAGTL), 121 to 141 (SWWIATVLALAGCWLLFSDSS), 147 to 167 (VAGVLMALGAGASFAGYTLIS), 183 to 203 (VFMISAILLTPLLWQLDISWI), 208 to 228 (GLGTSLYIGLIATCAAYFLFA), 238 to 258 (AAVTLSLAEPLTASLLGVFFI), and 261 to 281 (MLSPSSWLGIALMMLGLLVIS). 2 consecutive EamA domains span residues 15–138 (FFWG…LLFS) and 158–282 (ASFA…VISA).

It belongs to the EamA transporter family.

The protein localises to the cell membrane. This is an uncharacterized protein from Bacillus subtilis (strain 168).